The following is a 212-amino-acid chain: Prolactin (212 aa).

Positions 1–24 are cleaved as a signal peptide; that stretch reads MAHRETNGSKLFITVLCMVAACSA. Intrachain disulfides connect Cys70/Cys185 and Cys202/Cys212.

This sequence belongs to the somatotropin/prolactin family.

Its subcellular location is the secreted. The chain is Prolactin (prl) from Sparus aurata (Gilthead sea bream).